A 218-amino-acid chain; its full sequence is Deoxyribose-phosphate aldolase (218 aa).

Catalysis depends on Asp89, which acts as the Proton donor/acceptor. The active-site Schiff-base intermediate with acetaldehyde is Lys152. Residue Lys182 is the Proton donor/acceptor of the active site.

It belongs to the DeoC/FbaB aldolase family. DeoC type 1 subfamily.

The protein localises to the cytoplasm. It carries out the reaction 2-deoxy-D-ribose 5-phosphate = D-glyceraldehyde 3-phosphate + acetaldehyde. Its pathway is carbohydrate degradation; 2-deoxy-D-ribose 1-phosphate degradation; D-glyceraldehyde 3-phosphate and acetaldehyde from 2-deoxy-alpha-D-ribose 1-phosphate: step 2/2. Its function is as follows. Catalyzes a reversible aldol reaction between acetaldehyde and D-glyceraldehyde 3-phosphate to generate 2-deoxy-D-ribose 5-phosphate. The chain is Deoxyribose-phosphate aldolase from Corynebacterium diphtheriae (strain ATCC 700971 / NCTC 13129 / Biotype gravis).